The sequence spans 945 residues: Leucine--tRNA ligase (945 aa).

A 'HIGH' region motif is present at residues 66–77 (PYPSGTGLHVGH). Residues 716–720 (KMGKS) carry the 'KMSKS' region motif. Lysine 719 provides a ligand contact to ATP.

Belongs to the class-I aminoacyl-tRNA synthetase family.

The protein resides in the cytoplasm. It catalyses the reaction tRNA(Leu) + L-leucine + ATP = L-leucyl-tRNA(Leu) + AMP + diphosphate. This Rhodococcus jostii (strain RHA1) protein is Leucine--tRNA ligase.